The chain runs to 452 residues: Golgi reassembly-stacking protein 2 (452 aa).

Residue G2 is the site of N-myristoyl glycine attachment. 2 PDZ GRASP-type domains span residues 15–105 (EGYH…FCSF) and 111–199 (NVWH…YGYL). The tract at residues 15 to 215 (EGYHVLRVQE…PFEEGKKISL (201 aa)) is GRASP. 2 positions are modified to dimethylated arginine: R30 and R47. An important for membrane binding region spans residues 194-199 (IGYGYL). S214 is subject to Phosphoserine. Phosphothreonine occurs at positions 222 and 225. Residues 372–424 (PESSSAASSGELLSSLPPTSNAPSDPATTTAKADAASSLTVDVTPPTAKAPTT) are compositionally biased toward low complexity. Residues 372 to 452 (PESSSAASSG…AVDANASESP (81 aa)) are disordered. S409 bears the Phosphoserine mark. Phosphothreonine occurs at positions 415 and 433. Residues S436, S441, S449, and S451 each carry the phosphoserine modification.

It belongs to the GORASP family. As to quaternary structure, homodimer. Homooligomer. ER stress induces phosphorylation-dependent monomerization. Interacts with BLZF1/Golgin 45. Identified in a complex with RAB2 and GORASP2. Interacts with JAM2 and JAM3. Interacts with members of the p24 cargo receptors. Interacts with CNIH1 and the cytoplasmic domain of transmembrane TGFA, prior its transit in the trans-Golgi. Interacts with KCTD5. Interacts with TMED2 and TMED3. Interacts with SEC16A in response to ER stress. Interacts (via PDZ GRASP-type 1 domain) with core-glycosylated CFTR in response to ER stress. Post-translationally, myristoylated. Myristoylation is essential for the Golgi targeting. In terms of processing, palmitoylated. Phosphorylated in mitotic cells. ER stress-induced phosphorylation at Ser-441 induces monomerization and subsequent relocalization from Golgi to ER which is essential for mediating unconventional (ER/Golgi-independent) trafficking of CFTR to the cell membrane.

The protein localises to the golgi apparatus membrane. Its subcellular location is the endoplasmic reticulum membrane. It localises to the golgi apparatus. In terms of biological role, key structural protein of the Golgi apparatus. The membrane cisternae of the Golgi apparatus adhere to each other to form stacks, which are aligned side by side to form the Golgi ribbon. Acting in concert with GORASP1/GRASP65, is required for the formation and maintenance of the Golgi ribbon, and may be dispensable for the formation of stacks. However, other studies suggest that GORASP2 plays a role in the assembly and membrane stacking of the Golgi cisternae, and in the process by which Golgi stacks reform after breakdown during mitosis and meiosis. May regulate the intracellular transport and presentation of a defined set of transmembrane proteins, such as transmembrane TGFA. Required for normal acrosome formation during spermiogenesis and normal male fertility, probably by promoting colocalization of JAM2 and JAM3 at contact sites between germ cells and Sertoli cells. Mediates ER stress-induced unconventional (ER/Golgi-independent) trafficking of core-glycosylated CFTR to cell membrane. The polypeptide is Golgi reassembly-stacking protein 2 (GORASP2) (Homo sapiens (Human)).